Consider the following 311-residue polypeptide: Ribosomal RNA large subunit methyltransferase F (311 aa).

Belongs to the methyltransferase superfamily. METTL16/RlmF family.

The protein resides in the cytoplasm. It catalyses the reaction adenosine(1618) in 23S rRNA + S-adenosyl-L-methionine = N(6)-methyladenosine(1618) in 23S rRNA + S-adenosyl-L-homocysteine + H(+). Functionally, specifically methylates the adenine in position 1618 of 23S rRNA. This chain is Ribosomal RNA large subunit methyltransferase F, found in Pectobacterium atrosepticum (strain SCRI 1043 / ATCC BAA-672) (Erwinia carotovora subsp. atroseptica).